A 351-amino-acid polypeptide reads, in one-letter code: MAKRRLNKRQQWRIEKIQKERTVRAARKEKAVEEQAAAGELGPEQNGLVIAHYGQQLDIEALEGPESGQVFRCFVRANIDSLVTGDRVVWRPGKSKTGVIVARCERENLLQRPDNFGALKPVAANIDHIILVIAPEPEPHDNLIDRYLVASESSDIPAVILLNKTDLINDDNRDQIEALLARYQALGYEVARTSAAETAGTPAPEVEALVRNQTSVFVGQSGVGKSSIIQTLLPDELLRVGAVSESTGKGVHTTTTAKLFHLPGGGDLIDSPGIREFGLWHMTPQEVEYGFREIRPLIGLCKFRNCRHMGDPGCALDAAAEAGDISPERLKSFHRILQDMTDQQARGLKLT.

The CP-type G domain occupies 107–277 (ENLLQRPDNF…LIDSPGIREF (171 aa)). GTP-binding positions include 163–166 (NKTD) and 219–227 (GQSGVGKSS). Positions 301, 306, 308, and 314 each coordinate Zn(2+).

Belongs to the TRAFAC class YlqF/YawG GTPase family. RsgA subfamily. Monomer. Associates with 30S ribosomal subunit, binds 16S rRNA. The cofactor is Zn(2+).

It localises to the cytoplasm. In terms of biological role, one of several proteins that assist in the late maturation steps of the functional core of the 30S ribosomal subunit. Helps release RbfA from mature subunits. May play a role in the assembly of ribosomal proteins into the subunit. Circularly permuted GTPase that catalyzes slow GTP hydrolysis, GTPase activity is stimulated by the 30S ribosomal subunit. The polypeptide is Small ribosomal subunit biogenesis GTPase RsgA (Marinobacter nauticus (strain ATCC 700491 / DSM 11845 / VT8) (Marinobacter aquaeolei)).